Consider the following 549-residue polypeptide: Siroheme synthase (549 aa).

Residues 1-203 (MNTFPLFFKL…GNENEALAQL (203 aa)) form a precorrin-2 dehydrogenase /sirohydrochlorin ferrochelatase region. NAD(+) is bound by residues 22–23 (DV) and 43–44 (PS). Ser128 carries the phosphoserine modification. The uroporphyrinogen-III C-methyltransferase stretch occupies residues 247–549 (GEVYIVGAGP…DGDLEQLIIG (303 aa)). Pro256 provides a ligand contact to S-adenosyl-L-methionine. The active-site Proton acceptor is Asp279. Lys301 functions as the Proton donor in the catalytic mechanism. Residues 332 to 334 (GGD), Ile337, 362 to 363 (TA), Met414, and Ala443 contribute to the S-adenosyl-L-methionine site.

It in the N-terminal section; belongs to the precorrin-2 dehydrogenase / sirohydrochlorin ferrochelatase family. This sequence in the C-terminal section; belongs to the precorrin methyltransferase family.

It carries out the reaction uroporphyrinogen III + 2 S-adenosyl-L-methionine = precorrin-2 + 2 S-adenosyl-L-homocysteine + H(+). The catalysed reaction is precorrin-2 + NAD(+) = sirohydrochlorin + NADH + 2 H(+). The enzyme catalyses siroheme + 2 H(+) = sirohydrochlorin + Fe(2+). The protein operates within cofactor biosynthesis; adenosylcobalamin biosynthesis; precorrin-2 from uroporphyrinogen III: step 1/1. Its pathway is cofactor biosynthesis; adenosylcobalamin biosynthesis; sirohydrochlorin from precorrin-2: step 1/1. It participates in porphyrin-containing compound metabolism; siroheme biosynthesis; precorrin-2 from uroporphyrinogen III: step 1/1. It functions in the pathway porphyrin-containing compound metabolism; siroheme biosynthesis; siroheme from sirohydrochlorin: step 1/1. The protein operates within porphyrin-containing compound metabolism; siroheme biosynthesis; sirohydrochlorin from precorrin-2: step 1/1. In terms of biological role, multifunctional enzyme that catalyzes the SAM-dependent methylations of uroporphyrinogen III at position C-2 and C-7 to form precorrin-2 via precorrin-1. Then it catalyzes the NAD-dependent ring dehydrogenation of precorrin-2 to yield sirohydrochlorin. Finally, it catalyzes the ferrochelation of sirohydrochlorin to yield siroheme. The chain is Siroheme synthase from Psychrobacter arcticus (strain DSM 17307 / VKM B-2377 / 273-4).